The primary structure comprises 81 residues: UPF0349 protein SE_0633 (81 aa).

Belongs to the UPF0349 family.

This chain is UPF0349 protein SE_0633, found in Staphylococcus epidermidis (strain ATCC 12228 / FDA PCI 1200).